The following is a 115-amino-acid chain: uncharacterized protein (115 aa).

This is an uncharacterized protein from Rickettsia prowazekii (strain Madrid E).